The sequence spans 377 residues: Cobalt-precorrin-5B C(1)-methyltransferase (377 aa).

The interval 1-21 is disordered; the sequence is MNPVRQPYDLAAPAPNGMRRG.

Belongs to the CbiD family.

It carries out the reaction Co-precorrin-5B + S-adenosyl-L-methionine = Co-precorrin-6A + S-adenosyl-L-homocysteine. Its pathway is cofactor biosynthesis; adenosylcobalamin biosynthesis; cob(II)yrinate a,c-diamide from sirohydrochlorin (anaerobic route): step 6/10. Its function is as follows. Catalyzes the methylation of C-1 in cobalt-precorrin-5B to form cobalt-precorrin-6A. This is Cobalt-precorrin-5B C(1)-methyltransferase from Chromobacterium violaceum (strain ATCC 12472 / DSM 30191 / JCM 1249 / CCUG 213 / NBRC 12614 / NCIMB 9131 / NCTC 9757 / MK).